Consider the following 242-residue polypeptide: NAD(P)H-hydrate epimerase (242 aa).

A YjeF N-terminal domain is found at 11–221; the sequence is AKALDAELMS…KVITKKFNLS (211 aa). 61-65 lines the (6S)-NADPHX pocket; sequence NNGGD. K(+) contacts are provided by Asn62 and Asp128. Residues 132–138 and Asp161 contribute to the (6S)-NADPHX site; that span reads GFSFKGP. Ser164 provides a ligand contact to K(+).

It belongs to the NnrE/AIBP family. The cofactor is K(+).

Its subcellular location is the cytoplasm. The protein resides in the mitochondrion. The protein localises to the nucleus. The enzyme catalyses (6R)-NADHX = (6S)-NADHX. It carries out the reaction (6R)-NADPHX = (6S)-NADPHX. Its function is as follows. Catalyzes the epimerization of the S- and R-forms of NAD(P)HX, a damaged form of NAD(P)H that is a result of enzymatic or heat-dependent hydration. This is a prerequisite for the S-specific NAD(P)H-hydrate dehydratase to allow the repair of both epimers of NAD(P)HX. May have a role in meiosis. The polypeptide is NAD(P)H-hydrate epimerase (mug182) (Schizosaccharomyces pombe (strain 972 / ATCC 24843) (Fission yeast)).